The sequence spans 209 residues: Uracil phosphoribosyltransferase (209 aa).

Residues Arg79, Arg104, and 131 to 139 (DPMLATGHS) contribute to the 5-phospho-alpha-D-ribose 1-diphosphate site. Residues Ile194 and 199–201 (GDA) contribute to the uracil site. Residue Asp200 coordinates 5-phospho-alpha-D-ribose 1-diphosphate.

It belongs to the UPRTase family. Mg(2+) serves as cofactor.

It catalyses the reaction UMP + diphosphate = 5-phospho-alpha-D-ribose 1-diphosphate + uracil. Its pathway is pyrimidine metabolism; UMP biosynthesis via salvage pathway; UMP from uracil: step 1/1. With respect to regulation, allosterically activated by GTP. Functionally, catalyzes the conversion of uracil and 5-phospho-alpha-D-ribose 1-diphosphate (PRPP) to UMP and diphosphate. The polypeptide is Uracil phosphoribosyltransferase (Caulobacter vibrioides (strain ATCC 19089 / CIP 103742 / CB 15) (Caulobacter crescentus)).